The primary structure comprises 796 residues: MAGRVESSIGGGEIDEEGDERGSMWDLDQSLDQPMDEEAGRLRNMYREKKFSAFLLLQLSFQSLGVVYGDLGTSPLYVFYNTFPRGIKDPEDIIGALSLIIYSLTLIPLLKYVFVVCKANDNGQGGTFALYSLLCRHAKVSTIPNQHRTDEELTTYSRTTFHERSFAAKTKRWLENGTSRKNALLILVLVGTCMVIGDGILTPAISVLSAAGGLRVNLPHINNGIVVVVAVVILVSLFSVQHYGTDRVGWLFAPIVFLWFLFIASIGMFNIWKHDPSVLKAFSPVYIFRYFKRGGQDRWTSLGGIMLSITGIEALFADLSHFPVSAVQFAFTVIVFPCLLLAYSGQAAYLRKYPHHVEDAFYQSIPKRVYWPMFIIATAAAIVASQATISATFSLIKQALAHGCFPRVKVVHTSRKFLGQIYVPDINWILMILCIAVTAGFKNQNQIGNAYGTAVVIVMLVTTLLMMLIMILVWRCHWVLVLLFTLLSLVVECTYFSAVLFKVNQGGWVPLVIAAAFLVIMYVWHYGTLKRYEFEMHSKVSMAWILGLGPSLGLVRVPGIGLVYTELASGVPHIFSHFITNLPATHSVVIFVCVKNLPVYTVPQEERFLVKRIGPKNFHMFRCVARYGYRDLHKKDDDFEKRLFESLFLFLRLESMMEGCSDSEDYSVCGSQQRQSRDGVNGNGNEIRNVSTFDTFDSIESVIAPTTTKRTSHTVTGSSQMSGGGDEVEFINGCRDAGVVHIMGNTVVRARREARFYKRIAIDYVYAFLRKICRENSAIFNVPQESLLNVGQIFYV.

Positions 1–30 (MAGRVESSIGGGEIDEEGDERGSMWDLDQS) are disordered. The Cytoplasmic segment spans residues 1 to 58 (MAGRVESSIGGGEIDEEGDERGSMWDLDQSLDQPMDEEAGRLRNMYREKKFSAFLLLQ). The chain crosses the membrane as a helical span at residues 59–79 (LSFQSLGVVYGDLGTSPLYVF). The Extracellular segment spans residues 80-95 (YNTFPRGIKDPEDIIG). Residues 96-116 (ALSLIIYSLTLIPLLKYVFVV) traverse the membrane as a helical segment. Residues 117-184 (CKANDNGQGG…ENGTSRKNAL (68 aa)) are Cytoplasmic-facing. A helical membrane pass occupies residues 185-205 (LILVLVGTCMVIGDGILTPAI). Residues 206–217 (SVLSAAGGLRVN) are Extracellular-facing. The helical transmembrane segment at 218–238 (LPHINNGIVVVVAVVILVSLF) threads the bilayer. At 239–248 (SVQHYGTDRV) the chain is on the cytoplasmic side. The helical transmembrane segment at 249-269 (GWLFAPIVFLWFLFIASIGMF) threads the bilayer. Residues 270-298 (NIWKHDPSVLKAFSPVYIFRYFKRGGQDR) lie on the Extracellular side of the membrane. Residues 299–319 (WTSLGGIMLSITGIEALFADL) form a helical membrane-spanning segment. The Cytoplasmic segment spans residues 320–321 (SH). The helical transmembrane segment at 322–342 (FPVSAVQFAFTVIVFPCLLLA) threads the bilayer. Over 343–368 (YSGQAAYLRKYPHHVEDAFYQSIPKR) the chain is Extracellular. A helical transmembrane segment spans residues 369-389 (VYWPMFIIATAAAIVASQATI). The Cytoplasmic portion of the chain corresponds to 390–420 (SATFSLIKQALAHGCFPRVKVVHTSRKFLGQ). The helical transmembrane segment at 421 to 441 (IYVPDINWILMILCIAVTAGF) threads the bilayer. At 442–453 (KNQNQIGNAYGT) the chain is on the extracellular side. The chain crosses the membrane as a helical span at residues 454-474 (AVVIVMLVTTLLMMLIMILVW). The Cytoplasmic segment spans residues 475 to 480 (RCHWVL). The chain crosses the membrane as a helical span at residues 481-501 (VLLFTLLSLVVECTYFSAVLF). Residues 502 to 505 (KVNQ) lie on the Extracellular side of the membrane. The chain crosses the membrane as a helical span at residues 506 to 526 (GGWVPLVIAAAFLVIMYVWHY). The Cytoplasmic segment spans residues 527 to 796 (GTLKRYEFEM…LLNVGQIFYV (270 aa)).

The protein belongs to the HAK/KUP transporter (TC 2.A.72.3) family.

It is found in the cell membrane. Functionally, putative potassium transporter. This is Potassium transporter 10 (POT10) from Arabidopsis thaliana (Mouse-ear cress).